The chain runs to 244 residues: tRNA (guanine-N(1)-)-methyltransferase (244 aa).

Residues Gly113 and 133 to 138 (IGDYVL) each bind S-adenosyl-L-methionine.

It belongs to the RNA methyltransferase TrmD family. Homodimer.

The protein resides in the cytoplasm. The catalysed reaction is guanosine(37) in tRNA + S-adenosyl-L-methionine = N(1)-methylguanosine(37) in tRNA + S-adenosyl-L-homocysteine + H(+). Specifically methylates guanosine-37 in various tRNAs. The polypeptide is tRNA (guanine-N(1)-)-methyltransferase (Bacillus cereus (strain B4264)).